Consider the following 91-residue polypeptide: Small ribosomal subunit protein uS19 (91 aa).

Positions 72–91 are disordered; that stretch reads GEFSPTRTYTGHGSEKGKKK.

Belongs to the universal ribosomal protein uS19 family.

Protein S19 forms a complex with S13 that binds strongly to the 16S ribosomal RNA. The protein is Small ribosomal subunit protein uS19 of Mycoplasma mobile (strain ATCC 43663 / 163K / NCTC 11711) (Mesomycoplasma mobile).